The chain runs to 1109 residues: Ankyrin repeat- and BTB/POZ domain-containing protein 3 (1109 aa).

Residues 168–188 (IVLSWGLAAHCTAAALAALSL) traverse the membrane as a helical segment. The interval 260–302 (SCSGPGPGSSSGSGPGPGSGPGAPAADKERETPGGGAASGGPC) is disordered. The span at 264–280 (PGPGSSSGSGPGPGSGP) shows a compositional bias: gly residues. ANK repeat units follow at residues 608 to 637 (QGMT…DLNV), 654 to 683 (RHWT…KVEG), 692 to 721 (YSET…DPLI), 735 to 764 (GDMN…KEKS), and 830 to 859 (TWLE…TIQE). A BTB domain is found at 928-994 (SDVTFLVEGR…LYYGGPESLL (67 aa)).

The protein resides in the membrane. The polypeptide is Ankyrin repeat- and BTB/POZ domain-containing protein 3 (Abtb3) (Mus musculus (Mouse)).